Reading from the N-terminus, the 333-residue chain is Transcription initiation factor IIB (333 aa).

A TFIIB-type zinc finger spans residues 33–64 (EVYKCPICGNDKFVYNYERGEAVCIVCGAVVQ). The Zn(2+) site is built by Cys-37, Cys-40, Cys-56, and Cys-59. 2 repeat units span residues 149–232 (QELE…LREL) and 243–324 (LYIS…ELAK).

Belongs to the TFIIB family.

Functionally, stabilizes TBP binding to an archaeal box-A promoter. Also responsible for recruiting RNA polymerase II to the pre-initiation complex (DNA-TBP-TFIIB). In Pyrobaculum aerophilum (strain ATCC 51768 / DSM 7523 / JCM 9630 / CIP 104966 / NBRC 100827 / IM2), this protein is Transcription initiation factor IIB.